A 39-amino-acid polypeptide reads, in one-letter code: uncharacterized protein (39 aa).

The span at 1–16 shows a compositional bias: polar residues; the sequence is MLNIQPTQSIVNNQPK. The segment at 1–39 is disordered; that stretch reads MLNIQPTQSIVNNQPKSDQKKQKPADLLKEFYDKTGNRN. Residues 17–39 are compositionally biased toward basic and acidic residues; it reads SDQKKQKPADLLKEFYDKTGNRN.

This is an uncharacterized protein from Dictyostelium discoideum (Social amoeba).